Here is a 506-residue protein sequence, read N- to C-terminus: Maturase K (506 aa).

This sequence belongs to the intron maturase 2 family. MatK subfamily.

The protein localises to the plastid. Its subcellular location is the chloroplast. Its function is as follows. Usually encoded in the trnK tRNA gene intron. Probably assists in splicing its own and other chloroplast group II introns. This Trifolium resupinatum (Persian clover) protein is Maturase K.